Here is a 599-residue protein sequence, read N- to C-terminus: Elongation factor 4 (599 aa).

One can recognise a tr-type G domain in the interval 2–184; it reads KNIRNFSIIA…RLVRDIPPPE (183 aa). GTP contacts are provided by residues 14-19 and 131-134; these read DHGKST and NKID.

The protein belongs to the TRAFAC class translation factor GTPase superfamily. Classic translation factor GTPase family. LepA subfamily.

The protein localises to the cell inner membrane. It catalyses the reaction GTP + H2O = GDP + phosphate + H(+). Required for accurate and efficient protein synthesis under certain stress conditions. May act as a fidelity factor of the translation reaction, by catalyzing a one-codon backward translocation of tRNAs on improperly translocated ribosomes. Back-translocation proceeds from a post-translocation (POST) complex to a pre-translocation (PRE) complex, thus giving elongation factor G a second chance to translocate the tRNAs correctly. Binds to ribosomes in a GTP-dependent manner. This Escherichia coli (strain UTI89 / UPEC) protein is Elongation factor 4.